Here is a 486-residue protein sequence, read N- to C-terminus: L-arabinose isomerase (486 aa).

4 residues coordinate Mn(2+): Glu299, Glu324, His341, and His440.

It belongs to the arabinose isomerase family. Requires Mn(2+) as cofactor.

The catalysed reaction is beta-L-arabinopyranose = L-ribulose. Its pathway is carbohydrate degradation; L-arabinose degradation via L-ribulose; D-xylulose 5-phosphate from L-arabinose (bacterial route): step 1/3. Its function is as follows. Catalyzes the conversion of L-arabinose to L-ribulose. This is L-arabinose isomerase from Shouchella clausii (strain KSM-K16) (Alkalihalobacillus clausii).